The chain runs to 219 residues: Proline-rich protein 27 (219 aa).

Positions 1-15 are cleaved as a signal peptide; that stretch reads MKLLLWACIVCVAFA. Residues 155 to 204 are compositionally biased toward low complexity; the sequence is AAEPAAEAPVGAEPAAEAPVAAEPAAEAPVGVEPAAEEPSPAEPATAKPA. A disordered region spans residues 155 to 219; that stretch reads AAEPAAEAPV…PSPSLEQANQ (65 aa).

It is found in the secreted. The protein is Proline-rich protein 27 (PRR27) of Homo sapiens (Human).